The chain runs to 203 residues: dATP triphosphohydrolase (203 aa).

Arg17 serves as a coordination point for dATP. Residues His31, His73, Asp74, Glu77, Asp82, and Asp130 each coordinate Co(2+).

The protein belongs to the Caudovirales dATP triphosphohydrolase family. Co(2+) is required as a cofactor.

It catalyses the reaction dATP + H2O = 2'-deoxyadenosine + triphosphate + H(+). It carries out the reaction dADP + H2O = 2'-deoxyadenosine + diphosphate. The catalysed reaction is dAMP + H2O = 2'-deoxyadenosine + phosphate. Functionally, catalyzes the hydrolysis of dATP, dADP and dAMP into dA. This step is essential for Z-genome synthesis (containing aminoadenine instead of adenine). Specifically removes dATP and its precursor dADP from the nucleotide pool of the host, preventing the incorporation of A into the phage genome and favoring the integration of the Z-base into the viral genome. In Acinetobacter phage SH-Ab 15497, this protein is dATP triphosphohydrolase (datZ).